The following is a 295-amino-acid chain: MQVFTGTDKVKRGLAQMLKGGVIMDVTNAEQAEIAEEAGAVAVMALERVPADIRAEGGVARMADPKKIKEIMSAVSIPVMAKVRIGHFVEAQILEALGVDFIDESEVLTPADEKYHINKHAFKVPFVCGARDLGEALRRIAEGAAMIRTKGEAGTGNVVEAVRHMRQIMDEIRSLVLLPDEELVAKAKELGAPLDLIIETKKLGRLPVVNFAAGGIATPADAALMMHLGADGVFVGSGIFKSKNPRKRARAIVLAVTYYDDPYVLAEISEDLGEPMPGIDVRKLSESELLQVRGW.

Asp25 is a D-ribose 5-phosphate binding site. The active-site Schiff-base intermediate with D-ribose 5-phosphate is Lys82. Gly154 is a D-ribose 5-phosphate binding site. Residue Arg166 participates in D-glyceraldehyde 3-phosphate binding. Residues Gly215 and 236–237 (GS) each bind D-ribose 5-phosphate.

Belongs to the PdxS/SNZ family. As to quaternary structure, in the presence of PdxT, forms a dodecamer of heterodimers.

It carries out the reaction aldehydo-D-ribose 5-phosphate + D-glyceraldehyde 3-phosphate + L-glutamine = pyridoxal 5'-phosphate + L-glutamate + phosphate + 3 H2O + H(+). It functions in the pathway cofactor biosynthesis; pyridoxal 5'-phosphate biosynthesis. In terms of biological role, catalyzes the formation of pyridoxal 5'-phosphate from ribose 5-phosphate (RBP), glyceraldehyde 3-phosphate (G3P) and ammonia. The ammonia is provided by the PdxT subunit. Can also use ribulose 5-phosphate and dihydroxyacetone phosphate as substrates, resulting from enzyme-catalyzed isomerization of RBP and G3P, respectively. The chain is Pyridoxal 5'-phosphate synthase subunit PdxS from Dictyoglomus turgidum (strain DSM 6724 / Z-1310).